Reading from the N-terminus, the 114-residue chain is Small ribosomal subunit protein uS14m (114 aa).

It belongs to the universal ribosomal protein uS14 family.

It is found in the mitochondrion. This chain is Small ribosomal subunit protein uS14m (MRP2), found in Eremothecium gossypii (strain ATCC 10895 / CBS 109.51 / FGSC 9923 / NRRL Y-1056) (Yeast).